A 185-amino-acid chain; its full sequence is Large ribosomal subunit protein uL22 (185 aa).

It belongs to the universal ribosomal protein uL22 family. As to quaternary structure, part of the 50S ribosomal subunit.

Functionally, this protein binds specifically to 23S rRNA. It makes multiple contacts with different domains of the 23S rRNA in the assembled 50S subunit and ribosome. Its function is as follows. The globular domain of the protein is located near the polypeptide exit tunnel on the outside of the subunit, while an extended beta-hairpin is found that lines the wall of the exit tunnel in the center of the 70S ribosome. This chain is Large ribosomal subunit protein uL22, found in Pyrobaculum neutrophilum (strain DSM 2338 / JCM 9278 / NBRC 100436 / V24Sta) (Thermoproteus neutrophilus).